The following is a 315-amino-acid chain: Ribonuclease Z (315 aa).

Zn(2+) is bound by residues His61, His63, Asp65, His66, His151, Asp219, and His278. Asp65 functions as the Proton acceptor in the catalytic mechanism.

The protein belongs to the RNase Z family. As to quaternary structure, homodimer. Zn(2+) is required as a cofactor.

The catalysed reaction is Endonucleolytic cleavage of RNA, removing extra 3' nucleotides from tRNA precursor, generating 3' termini of tRNAs. A 3'-hydroxy group is left at the tRNA terminus and a 5'-phosphoryl group is left at the trailer molecule.. Zinc phosphodiesterase, which displays some tRNA 3'-processing endonuclease activity. Probably involved in tRNA maturation, by removing a 3'-trailer from precursor tRNA. This Clostridium botulinum (strain Alaska E43 / Type E3) protein is Ribonuclease Z.